We begin with the raw amino-acid sequence, 424 residues long: Tyrosine--tRNA ligase (424 aa).

Residue Tyr-37 coordinates L-tyrosine. A 'HIGH' region motif is present at residues 42–51; the sequence is ITADSLHVGH. The L-tyrosine site is built by Tyr-175 and Gln-179. Residues 235-239 carry the 'KMSKS' region motif; that stretch reads KFGKT. Residue Lys-238 coordinates ATP. Residues 356-414 enclose the S4 RNA-binding domain; it reads GNLQQLLVYSRLALSRSHAKSMIVSNSVRINNIIQNNPFYILCNRDKMYHKYTLLSRGK.

Belongs to the class-I aminoacyl-tRNA synthetase family. TyrS type 1 subfamily. In terms of assembly, homodimer.

It is found in the cytoplasm. It carries out the reaction tRNA(Tyr) + L-tyrosine + ATP = L-tyrosyl-tRNA(Tyr) + AMP + diphosphate + H(+). Catalyzes the attachment of tyrosine to tRNA(Tyr) in a two-step reaction: tyrosine is first activated by ATP to form Tyr-AMP and then transferred to the acceptor end of tRNA(Tyr). The chain is Tyrosine--tRNA ligase from Buchnera aphidicola subsp. Baizongia pistaciae (strain Bp).